The following is a 120-amino-acid chain: NADH-ubiquinone oxidoreductase chain 3 (120 aa).

The next 3 membrane-spanning stretches (helical) occupy residues 10 to 30, 62 to 82, and 89 to 109; these read ILILFFISLGLSIILFFLGYF, FYLVAILFLIFDLEITFLFPF, and MTLFSYSIMLIFLIILTIGFI.

Belongs to the complex I subunit 3 family.

The protein localises to the mitochondrion membrane. It catalyses the reaction a ubiquinone + NADH + 5 H(+)(in) = a ubiquinol + NAD(+) + 4 H(+)(out). Its function is as follows. Core subunit of the mitochondrial membrane respiratory chain NADH dehydrogenase (Complex I) that is believed to belong to the minimal assembly required for catalysis. Complex I functions in the transfer of electrons from NADH to the respiratory chain. The immediate electron acceptor for the enzyme is believed to be ubiquinone. The chain is NADH-ubiquinone oxidoreductase chain 3 (nad3) from Dictyostelium citrinum (Slime mold).